Here is a 396-residue protein sequence, read N- to C-terminus: 1-deoxy-D-xylulose 5-phosphate reductoisomerase (396 aa).

Residues Thr13, Gly14, Ser15, Ile16, and Asn127 each contribute to the NADPH site. Lys128 is a binding site for 1-deoxy-D-xylulose 5-phosphate. Position 129 (Glu129) interacts with NADPH. Position 153 (Asp153) interacts with Mn(2+). Residues Ser154, Glu155, Ser184, and His207 each coordinate 1-deoxy-D-xylulose 5-phosphate. Glu155 serves as a coordination point for Mn(2+). Position 213 (Gly213) interacts with NADPH. 1-deoxy-D-xylulose 5-phosphate is bound by residues Ser220, Asn225, Lys226, and Glu229. Glu229 serves as a coordination point for Mn(2+).

It belongs to the DXR family. It depends on Mg(2+) as a cofactor. Mn(2+) serves as cofactor.

The enzyme catalyses 2-C-methyl-D-erythritol 4-phosphate + NADP(+) = 1-deoxy-D-xylulose 5-phosphate + NADPH + H(+). It participates in isoprenoid biosynthesis; isopentenyl diphosphate biosynthesis via DXP pathway; isopentenyl diphosphate from 1-deoxy-D-xylulose 5-phosphate: step 1/6. In terms of biological role, catalyzes the NADPH-dependent rearrangement and reduction of 1-deoxy-D-xylulose-5-phosphate (DXP) to 2-C-methyl-D-erythritol 4-phosphate (MEP). The chain is 1-deoxy-D-xylulose 5-phosphate reductoisomerase from Pseudomonas syringae pv. tomato (strain ATCC BAA-871 / DC3000).